A 197-amino-acid polypeptide reads, in one-letter code: NADH-quinone oxidoreductase subunit C (197 aa).

The protein belongs to the complex I 30 kDa subunit family. In terms of assembly, NDH-1 is composed of 14 different subunits. Subunits NuoB, C, D, E, F, and G constitute the peripheral sector of the complex.

The protein resides in the cell inner membrane. The enzyme catalyses a quinone + NADH + 5 H(+)(in) = a quinol + NAD(+) + 4 H(+)(out). Its function is as follows. NDH-1 shuttles electrons from NADH, via FMN and iron-sulfur (Fe-S) centers, to quinones in the respiratory chain. The immediate electron acceptor for the enzyme in this species is believed to be ubiquinone. Couples the redox reaction to proton translocation (for every two electrons transferred, four hydrogen ions are translocated across the cytoplasmic membrane), and thus conserves the redox energy in a proton gradient. This chain is NADH-quinone oxidoreductase subunit C, found in Neisseria meningitidis serogroup C (strain 053442).